The primary structure comprises 192 residues: UPF0301 protein BTH_I1462 (192 aa).

The protein belongs to the UPF0301 (AlgH) family.

The polypeptide is UPF0301 protein BTH_I1462 (Burkholderia thailandensis (strain ATCC 700388 / DSM 13276 / CCUG 48851 / CIP 106301 / E264)).